The following is a 307-amino-acid chain: Ribonuclease Z (307 aa).

7 residues coordinate Zn(2+): His63, His65, Asp67, His68, His143, Asp213, and His271. The Proton acceptor role is filled by Asp67.

It belongs to the RNase Z family. Homodimer. Zn(2+) is required as a cofactor.

The catalysed reaction is Endonucleolytic cleavage of RNA, removing extra 3' nucleotides from tRNA precursor, generating 3' termini of tRNAs. A 3'-hydroxy group is left at the tRNA terminus and a 5'-phosphoryl group is left at the trailer molecule.. In terms of biological role, zinc phosphodiesterase, which displays some tRNA 3'-processing endonuclease activity. Probably involved in tRNA maturation, by removing a 3'-trailer from precursor tRNA. The sequence is that of Ribonuclease Z from Lactococcus lactis subsp. lactis (strain IL1403) (Streptococcus lactis).